The sequence spans 269 residues: Shikimate dehydrogenase (NADP(+)) (269 aa).

Residues 14–16 (SKS) and Thr61 each bind shikimate. Lys65 acts as the Proton acceptor in catalysis. Glu77 provides a ligand contact to NADP(+). Asn86 and Asp102 together coordinate shikimate. Residues 126-130 (GAGGA), 150-155 (NRTYEK), and Met213 contribute to the NADP(+) site. Tyr215 provides a ligand contact to shikimate. Residue Gly237 coordinates NADP(+).

This sequence belongs to the shikimate dehydrogenase family. In terms of assembly, homodimer.

The catalysed reaction is shikimate + NADP(+) = 3-dehydroshikimate + NADPH + H(+). The protein operates within metabolic intermediate biosynthesis; chorismate biosynthesis; chorismate from D-erythrose 4-phosphate and phosphoenolpyruvate: step 4/7. Its function is as follows. Involved in the biosynthesis of the chorismate, which leads to the biosynthesis of aromatic amino acids. Catalyzes the reversible NADPH linked reduction of 3-dehydroshikimate (DHSA) to yield shikimate (SA). The polypeptide is Shikimate dehydrogenase (NADP(+)) (Aliivibrio fischeri (strain ATCC 700601 / ES114) (Vibrio fischeri)).